An 83-amino-acid chain; its full sequence is RNA-binding protein Hfq (83 aa).

Residues 9–69 (DQLLNTARKE…ISTIIPAKPI (61 aa)) enclose the Sm domain.

It belongs to the Hfq family. In terms of assembly, homohexamer.

Functionally, RNA chaperone that binds small regulatory RNA (sRNAs) and mRNAs to facilitate mRNA translational regulation in response to envelope stress, environmental stress and changes in metabolite concentrations. Also binds with high specificity to tRNAs. The sequence is that of RNA-binding protein Hfq from Leptospira biflexa serovar Patoc (strain Patoc 1 / Ames).